Consider the following 250-residue polypeptide: tRNA pseudouridine synthase A (250 aa).

The active-site Nucleophile is Asp52. Tyr111 is a substrate binding site.

It belongs to the tRNA pseudouridine synthase TruA family. In terms of assembly, homodimer.

It carries out the reaction uridine(38/39/40) in tRNA = pseudouridine(38/39/40) in tRNA. In terms of biological role, formation of pseudouridine at positions 38, 39 and 40 in the anticodon stem and loop of transfer RNAs. The sequence is that of tRNA pseudouridine synthase A from Methylobacterium sp. (strain 4-46).